A 396-amino-acid polypeptide reads, in one-letter code: Bone morphogenetic protein 2 (396 aa).

Residues 1–23 form the signal peptide; it reads MVAGTRCLLALLLPQVLLGGAAG. Positions 24–282 are cleaved as a propeptide — cleaved by PCSK5; the sequence is LIPELGRRKF…GHPLHRREKR (259 aa). At Ser-87 the chain carries Phosphoserine. N-linked (GlcNAc...) asparagine glycans are attached at residues Asn-135, Asn-163, Asn-164, and Asn-200. The tract at residues 272-293 is disordered; it reads KGHPLHRREKRQAKHKQRKRLK. Over residues 274–293 the composition is skewed to basic residues; it reads HPLHRREKRQAKHKQRKRLK. Disulfide bonds link Cys-296/Cys-361, Cys-325/Cys-393, and Cys-329/Cys-395. Residue Asn-338 is glycosylated (N-linked (GlcNAc...) asparagine).

The protein belongs to the TGF-beta family. As to quaternary structure, homodimer; disulfide-linked. Interacts with SOSTDC1. Interacts with GREM2, RGMA, RGMB and RGMC. Interacts with ASPN. Interacts with MAFP5. Interacts with FBN1 (via N-terminal domain) and FBN2. Interacts with type I receptor BMPR1A. Interacts with type II receptor BMPR2. Interacts with ERFE. Interacts with BMPR1A/ALK3; the interaction may induce HAMP expression. Interacts with TGFBR3.

Its subcellular location is the secreted. Functionally, growth factor of the TGF-beta superfamily that plays essential roles in many developmental processes, including cardiogenesis, neurogenesis, and osteogenesis. Induces cartilage and bone formation. Initiates the canonical BMP signaling cascade by associating with type I receptor BMPR1A and type II receptor BMPR2. Once all three components are bound together in a complex at the cell surface, BMPR2 phosphorylates and activates BMPR1A. In turn, BMPR1A propagates signal by phosphorylating SMAD1/5/8 that travel to the nucleus and act as activators and repressors of transcription of target genes. Also acts to promote expression of HAMP, via the interaction with its receptor BMPR1A/ALK3. Can also signal through non-canonical pathways such as ERK/MAP kinase signaling cascade that regulates osteoblast differentiation. Also stimulates the differentiation of myoblasts into osteoblasts via the EIF2AK3-EIF2A-ATF4 pathway by stimulating EIF2A phosphorylation which leads to increased expression of ATF4 which plays a central role in osteoblast differentiation. Acts as a positive regulator of odontoblast differentiation during mesenchymal tooth germ formation, expression is repressed during the bell stage by MSX1-mediated inhibition of CTNNB1 signaling. In Dama dama (Fallow deer), this protein is Bone morphogenetic protein 2 (BMP2).